The sequence spans 144 residues: Large ribosomal subunit protein eL27 (144 aa).

The protein belongs to the eukaryotic ribosomal protein eL27 family.

Its subcellular location is the cytoplasm. This Tetrahymena thermophila protein is Large ribosomal subunit protein eL27 (RPL27).